The primary structure comprises 318 residues: Tyrosine recombinase XerC (318 aa).

The Core-binding (CB) domain occupies 17–108; that stretch reads PEVMAERRRW…GLRSFLRYLE (92 aa). One can recognise a Tyr recombinase domain in the interval 129–312; the sequence is SLPKALTDRE…DSARLLEIYD (184 aa). Catalysis depends on residues Arg172, Lys196, His264, Arg267, and His290. Catalysis depends on Tyr299, which acts as the O-(3'-phospho-DNA)-tyrosine intermediate.

The protein belongs to the 'phage' integrase family. XerC subfamily. As to quaternary structure, forms a cyclic heterotetrameric complex composed of two molecules of XerC and two molecules of XerD.

It is found in the cytoplasm. Functionally, site-specific tyrosine recombinase, which acts by catalyzing the cutting and rejoining of the recombining DNA molecules. The XerC-XerD complex is essential to convert dimers of the bacterial chromosome into monomers to permit their segregation at cell division. It also contributes to the segregational stability of plasmids. The chain is Tyrosine recombinase XerC from Rhizobium meliloti (strain 1021) (Ensifer meliloti).